The following is a 128-amino-acid chain: Disintegrin gabonin-1 (128 aa).

Residues 1 to 20 (MIQVLLVIICLAVFPYQGSS) form the signal peptide. Residues 21 to 47 (IILESGNVNDYEIVYPKKVTVLPTGAM) constitute a propeptide that is removed on maturation. The 66-residue stretch at 47-112 (MNSAHPCCDP…DCPRNPNKGE (66 aa)) folds into the Disintegrin domain. Disulfide bonds link Cys-53-Cys-76, Cys-67-Cys-73, Cys-72-Cys-97, and Cys-85-Cys-104. A Cell attachment site motif is present at residues 89 to 91 (RGD). The tract at residues 108 to 128 (PNKGESDELEWSAAATGSVLM) is disordered.

It belongs to the disintegrin family. Dimeric disintegrin subfamily. As to quaternary structure, heterodimer with bitisgabonin (bitisgabonin-1 is the name of the heterodimer); disulfide-linked. Expressed by the venom gland.

The protein localises to the secreted. In terms of biological role, the heterodimer bitisgabonin-1 is a potent inhibitor of the adhesion of the RGD-dependent integrin alpha-5/beta-1 (ITGA5/ITGB1) to immobilized fibronectin. This is Disintegrin gabonin-1 from Bitis gabonica (Gaboon adder).